The following is a 141-amino-acid chain: uncharacterized protein (141 aa).

4 consecutive transmembrane segments (helical) span residues 7–24 (YRIP…FLSP), 39–56 (FLKF…HRGI), 69–91 (FYLI…ILGF), and 116–138 (FFIL…SSFI).

It is found in the cell membrane. This is an uncharacterized protein from Aquifex aeolicus (strain VF5).